The following is a 1040-amino-acid chain: DNA mismatch repair protein MutS (1040 aa).

A compositionally biased stretch (polar residues) spans 1–10; it reads MPVKPSAQNN. Disordered regions lie at residues 1 to 22 and 130 to 157; these read MPVK…SVPV and ATGT…SKST. Positions 11 to 22 are enriched in low complexity; sequence SPSKPTSKSVPV. The span at 130–143 shows a compositional bias: polar residues; it reads ATGTDNANNPSNAP. 759–766 serves as a coordination point for ATP; it reads GPNMGGKS.

The protein belongs to the DNA mismatch repair MutS family.

Functionally, this protein is involved in the repair of mismatches in DNA. It is possible that it carries out the mismatch recognition step. This protein has a weak ATPase activity. This is DNA mismatch repair protein MutS from Psychrobacter cryohalolentis (strain ATCC BAA-1226 / DSM 17306 / VKM B-2378 / K5).